The following is a 246-amino-acid chain: MSFPYFISPEQAMRERSELARKGIARGRSVVALAYSEGVLFVAENPSRSLQKVSELYDRVGFAAVGRFNEFDNLRRGGIQFADTRGYAYDRRDVTGRQLANVYAQTLGTIFTEQAKPYEVELCVAEVAHYGETKAPELYRITYDGSIADEPHFVVMGGTTEPIIAALNESYTENASLQDAVEIAVKALSASAEGAEPRSLGPSTLEVAILDAGRPRRAFRRITGAALEALLPEQPQQADSGDKPTE.

This sequence belongs to the peptidase T1A family. As to quaternary structure, the 20S proteasome core is composed of 14 alpha and 14 beta subunits that assemble into four stacked heptameric rings, resulting in a barrel-shaped structure. The two inner rings, each composed of seven catalytic beta subunits, are sandwiched by two outer rings, each composed of seven alpha subunits. The catalytic chamber with the active sites is on the inside of the barrel. Has a gated structure, the ends of the cylinder being occluded by the N-termini of the alpha-subunits. Is capped by the proteasome-associated ATPase, ARC. Can also interact with the bacterial proteasome activator Bpa through the C-terminal hydrophobic-tyrosine-X motif (HbYX motif) of Bpa; Bpa forms a homooligomeric ring-like structure which stacks co-axially with the proteasomal alpha-rings. In terms of processing, pupylated at an undetermined lysine residue by the prokaryotic ubiquitin-like protein Pup with the help of the ligase PafA, which leads to its degradation by the proteasome and thereby constitutes a negative auto-regulation.

It is found in the cytoplasm. Its pathway is protein degradation; proteasomal Pup-dependent pathway. With respect to regulation, the formation of the proteasomal ATPase ARC-20S proteasome complex, likely via the docking of the C-termini of ARC into the intersubunit pockets in the alpha-rings, may trigger opening of the gate for substrate entry. Interconversion between the open-gate and close-gate conformations leads to a dynamic regulation of the 20S proteasome proteolysis activity. PPS auto-regulates its own activity via pupylation and degradation of its components. Peptidolytic activity is inhibited by N-acetyl-Leu-Leu-norleucinal (Ac-LLnL) in vitro. In terms of biological role, component of the proteasome core, a large protease complex with broad specificity involved in protein degradation. The M.smegmatis proteasome is able to cleave oligopeptides after hydrophobic residues, thus displaying chymotrypsin-like activity. In complex with the ATPase Mpa, degrades protein targets conjugated to a prokaryotic ubiquitin-like protein (Pup). Identified substrates of the M.smegmatis proteasome are the pupylated SodA and Ino1 proteins. The Pup-proteasome system (PPS) is essential for survival under starvation; PPS likely functions to recycle amino acids under nitrogen starvation, thereby enabling the cell to maintain basal metabolic activities. The chain is Proteasome subunit alpha from Mycolicibacterium smegmatis (strain ATCC 700084 / mc(2)155) (Mycobacterium smegmatis).